The following is a 1006-amino-acid chain: Probable beta-galactosidase A (1006 aa).

The signal sequence occupies residues 1–18 (MKLLSVCAVALLAAQAAG). Substrate-binding residues include Y96, N140, A141, and E142. An N-linked (GlcNAc...) asparagine glycan is attached at N156. Position 199 (N199) interacts with substrate. E200 (proton donor) is an active-site residue. A disulfide bond links C205 and C206. N207 is a glycosylation site (N-linked (GlcNAc...) asparagine). Position 260 (Y260) interacts with substrate. C266 and C315 are oxidised to a cystine. The active-site Nucleophile is E298. Y364 contributes to the substrate binding site. 6 N-linked (GlcNAc...) asparagine glycosylation sites follow: N373, N402, N422, N622, N777, and N914.

The protein belongs to the glycosyl hydrolase 35 family.

Its subcellular location is the secreted. It catalyses the reaction Hydrolysis of terminal non-reducing beta-D-galactose residues in beta-D-galactosides.. Cleaves beta-linked terminal galactosyl residues from gangliosides, glycoproteins, and glycosaminoglycans. The chain is Probable beta-galactosidase A (lacA) from Neosartorya fischeri (strain ATCC 1020 / DSM 3700 / CBS 544.65 / FGSC A1164 / JCM 1740 / NRRL 181 / WB 181) (Aspergillus fischerianus).